The chain runs to 479 residues: Ribulose bisphosphate carboxylase large chain (479 aa).

Residues 1-2 (MS) constitute a propeptide that is removed on maturation. Pro-3 bears the N-acetylproline mark. Substrate contacts are provided by Asn-123 and Thr-173. Residue Lys-175 is the Proton acceptor of the active site. Lys-177 serves as a coordination point for substrate. Mg(2+) is bound by residues Lys-201, Asp-203, and Glu-204. An N6-carboxylysine modification is found at Lys-201. Residue His-294 is the Proton acceptor of the active site. Residues Arg-295, His-327, and Ser-379 each coordinate substrate.

The protein belongs to the RuBisCO large chain family. Type I subfamily. As to quaternary structure, heterohexadecamer of 8 large chains and 8 small chains; disulfide-linked. The disulfide link is formed within the large subunit homodimers. Mg(2+) is required as a cofactor. In terms of processing, the disulfide bond which can form in the large chain dimeric partners within the hexadecamer appears to be associated with oxidative stress and protein turnover.

It localises to the plastid. The protein localises to the chloroplast. It carries out the reaction 2 (2R)-3-phosphoglycerate + 2 H(+) = D-ribulose 1,5-bisphosphate + CO2 + H2O. The enzyme catalyses D-ribulose 1,5-bisphosphate + O2 = 2-phosphoglycolate + (2R)-3-phosphoglycerate + 2 H(+). Its function is as follows. RuBisCO catalyzes two reactions: the carboxylation of D-ribulose 1,5-bisphosphate, the primary event in carbon dioxide fixation, as well as the oxidative fragmentation of the pentose substrate in the photorespiration process. Both reactions occur simultaneously and in competition at the same active site. The protein is Ribulose bisphosphate carboxylase large chain of Hordeum vulgare (Barley).